The sequence spans 495 residues: Bifunctional protein GlmU (495 aa).

The tract at residues 1 to 241 (MTFPGDTAVL…SALVAGVNNR (241 aa)) is pyrophosphorylase. UDP-N-acetyl-alpha-D-glucosamine is bound by residues 12 to 15 (LAAG), Lys-26, Gln-83, 88 to 89 (GT), 112 to 114 (SGD), Gly-151, Glu-166, Asn-181, and Asn-239. Residue Asp-114 coordinates Mg(2+). Position 239 (Asn-239) interacts with Mg(2+). The interval 242–262 (VQLAQLASELNRRVVAAHQLA) is linker. An N-acetyltransferase region spans residues 263–495 (GVTVVDPATT…TQPPDADQTP (233 aa)). Arg-344 and Lys-362 together coordinate UDP-N-acetyl-alpha-D-glucosamine. His-374 (proton acceptor) is an active-site residue. UDP-N-acetyl-alpha-D-glucosamine is bound by residues Tyr-377 and Asn-388. Acetyl-CoA-binding positions include Ala-391, 397 to 398 (NY), Ser-416, and Ala-434. Positions 457–495 (IENWVQRKRPGSPAAQASKRASEMACQQPTQPPDADQTP) are disordered. Low complexity predominate over residues 483–495 (QQPTQPPDADQTP).

This sequence in the N-terminal section; belongs to the N-acetylglucosamine-1-phosphate uridyltransferase family. The protein in the C-terminal section; belongs to the transferase hexapeptide repeat family. In terms of assembly, homotrimer. Mg(2+) serves as cofactor.

It is found in the cytoplasm. The enzyme catalyses alpha-D-glucosamine 1-phosphate + acetyl-CoA = N-acetyl-alpha-D-glucosamine 1-phosphate + CoA + H(+). It catalyses the reaction N-acetyl-alpha-D-glucosamine 1-phosphate + UTP + H(+) = UDP-N-acetyl-alpha-D-glucosamine + diphosphate. It participates in nucleotide-sugar biosynthesis; UDP-N-acetyl-alpha-D-glucosamine biosynthesis; N-acetyl-alpha-D-glucosamine 1-phosphate from alpha-D-glucosamine 6-phosphate (route II): step 2/2. It functions in the pathway nucleotide-sugar biosynthesis; UDP-N-acetyl-alpha-D-glucosamine biosynthesis; UDP-N-acetyl-alpha-D-glucosamine from N-acetyl-alpha-D-glucosamine 1-phosphate: step 1/1. Its pathway is bacterial outer membrane biogenesis; LPS lipid A biosynthesis. Functionally, catalyzes the last two sequential reactions in the de novo biosynthetic pathway for UDP-N-acetylglucosamine (UDP-GlcNAc). The C-terminal domain catalyzes the transfer of acetyl group from acetyl coenzyme A to glucosamine-1-phosphate (GlcN-1-P) to produce N-acetylglucosamine-1-phosphate (GlcNAc-1-P), which is converted into UDP-GlcNAc by the transfer of uridine 5-monophosphate (from uridine 5-triphosphate), a reaction catalyzed by the N-terminal domain. The polypeptide is Bifunctional protein GlmU (Mycobacterium bovis (strain ATCC BAA-935 / AF2122/97)).